The following is a 160-amino-acid chain: RTX-II toxin-activating lysine-acyltransferase ApxIIC (160 aa).

Residues His-23 and Asp-92 contribute to the active site.

The protein belongs to the RTX toxin acyltransferase family. As to quaternary structure, homodimer.

Its subcellular location is the cytoplasm. The catalysed reaction is a fatty acyl-[ACP] + L-lysyl-[protein] = N(6)-(fatty acyl)-L-lysyl-[protein] + holo-[ACP] + H(+). In terms of biological role, protein-lysine acyltransferase that catalyzes fatty acylation of the protoxin, thereby converting it to the active toxin. The chain is RTX-II toxin-activating lysine-acyltransferase ApxIIC (apxIIC) from Actinobacillus pleuropneumoniae (Haemophilus pleuropneumoniae).